The chain runs to 786 residues: E3 ubiquitin-protein ligase pub3 (786 aa).

A C2 domain is found at 1 to 109; that stretch reads MEQGAKRVRF…RSNREVSLTR (109 aa). Disordered regions lie at residues 134 to 225 and 263 to 306; these read IRAP…NSNA and TWTR…DSGN. The segment covering 142–193 has biased composition (low complexity); that stretch reads SSTTANRTTSTPTTTTARTTRTTPRPTATTNTSNQSTSNSTRNGTSAATSNG. A compositionally biased stretch (polar residues) spans 204-213; the sequence is HRSSPVTNRQ. A compositionally biased stretch (low complexity) spans 214–225; that stretch reads TNNTSALSNSNA. The WW 1 domain occupies 236 to 269; it reads GRLPPGWERRADSLGRTYYVDHNTRTTTWTRPAS. Composition is skewed to polar residues over residues 263-285 and 295-305; these read TWTR…QRLN and SNPSLMQSDSG. WW domains are found at residues 306-339 and 364-397; these read NDLP…DPRN and GPLP…DPRL. In terms of domain architecture, HECT spans 453–786; that stretch reads SAHDLKKRLM…VENTVGFGNE (334 aa). The Glycyl thioester intermediate role is filled by cysteine 754.

The catalysed reaction is S-ubiquitinyl-[E2 ubiquitin-conjugating enzyme]-L-cysteine + [acceptor protein]-L-lysine = [E2 ubiquitin-conjugating enzyme]-L-cysteine + N(6)-ubiquitinyl-[acceptor protein]-L-lysine.. It functions in the pathway protein modification; protein ubiquitination. In terms of biological role, E3 ubiquitin-protein ligase which accepts ubiquitin from an E2 ubiquitin-conjugating enzyme in the form of a thioester and then directly transfers the ubiquitin to targeted substrates. The protein is E3 ubiquitin-protein ligase pub3 (pub3) of Schizosaccharomyces pombe (strain 972 / ATCC 24843) (Fission yeast).